A 155-amino-acid chain; its full sequence is SsrA-binding protein (155 aa).

The protein belongs to the SmpB family.

The protein resides in the cytoplasm. Its function is as follows. Required for rescue of stalled ribosomes mediated by trans-translation. Binds to transfer-messenger RNA (tmRNA), required for stable association of tmRNA with ribosomes. tmRNA and SmpB together mimic tRNA shape, replacing the anticodon stem-loop with SmpB. tmRNA is encoded by the ssrA gene; the 2 termini fold to resemble tRNA(Ala) and it encodes a 'tag peptide', a short internal open reading frame. During trans-translation Ala-aminoacylated tmRNA acts like a tRNA, entering the A-site of stalled ribosomes, displacing the stalled mRNA. The ribosome then switches to translate the ORF on the tmRNA; the nascent peptide is terminated with the 'tag peptide' encoded by the tmRNA and targeted for degradation. The ribosome is freed to recommence translation, which seems to be the essential function of trans-translation. This is SsrA-binding protein from Bordetella bronchiseptica (strain ATCC BAA-588 / NCTC 13252 / RB50) (Alcaligenes bronchisepticus).